The primary structure comprises 151 residues: UPF0756 membrane protein GWCH70_2680 (151 aa).

The next 4 membrane-spanning stretches (helical) occupy residues 5–25 (ILFL…SLMI), 53–73 (WGVT…EIGF), 86–106 (WIAL…VTLL), and 116–136 (LVFG…GPLI).

Belongs to the UPF0756 family.

The protein localises to the cell membrane. This Geobacillus sp. (strain WCH70) protein is UPF0756 membrane protein GWCH70_2680.